The chain runs to 294 residues: Nucleotide-binding protein Dde_1774 (294 aa).

14–21 (GLSGAGKS) serves as a coordination point for ATP. A GTP-binding site is contributed by 66–69 (DLRQ).

It belongs to the RapZ-like family.

In terms of biological role, displays ATPase and GTPase activities. This Oleidesulfovibrio alaskensis (strain ATCC BAA-1058 / DSM 17464 / G20) (Desulfovibrio alaskensis) protein is Nucleotide-binding protein Dde_1774.